We begin with the raw amino-acid sequence, 393 residues long: UDP-sulfoquinovose synthase (393 aa).

NAD(+) is bound by residues 31–35 (DNLST), 74–75 (DI), Arg-100, and Asn-118. Arg-100 provides a ligand contact to substrate. 2 residues coordinate substrate: Thr-144 and Tyr-182. Thr-144 is a catalytic residue. The NAD(+) site is built by Tyr-182 and Lys-186. Tyr-182 functions as the Proton acceptor in the catalytic mechanism. Lys-186 is an active-site residue. Gln-209 is a binding site for substrate. NAD(+) is bound at residue Val-212. Substrate is bound by residues 238–241 (VVNR), 253–255 (TVY), and 326–328 (RVE).

This sequence belongs to the NAD(P)-dependent epimerase/dehydratase family. It depends on NAD(+) as a cofactor.

It carries out the reaction sulfite + UDP-alpha-D-glucose + H(+) = UDP-alpha-D-6-sulfoquinovose + H2O. Catalyzes the biosynthesis of UDP-sulfoquinovose by the transfer of sulfite to UDP-glucose. Important for the assembly of the S-layer N-glycans. The reaction probably occurs through an NAD(+)-dependent oxidation/dehydration/enolization/sulfite addition process. In vitro, in the absence of sulfite, UDP-D-glucose is converted via UDP-4-keto-D-glucose to UDP-D-glucose-5,6-ene. The protein is UDP-sulfoquinovose synthase of Sulfolobus acidocaldarius (strain ATCC 33909 / DSM 639 / JCM 8929 / NBRC 15157 / NCIMB 11770).